Consider the following 419-residue polypeptide: UDP-N-acetylglucosamine 1-carboxyvinyltransferase 2 (419 aa).

Position 24–25 (24–25 (KN)) interacts with phosphoenolpyruvate. R94 provides a ligand contact to UDP-N-acetyl-alpha-D-glucosamine. C118 functions as the Proton donor in the catalytic mechanism. A 2-(S-cysteinyl)pyruvic acid O-phosphothioketal modification is found at C118. UDP-N-acetyl-alpha-D-glucosamine is bound by residues 123–127 (RPIDQ), D307, and I329.

It belongs to the EPSP synthase family. MurA subfamily.

It localises to the cytoplasm. The enzyme catalyses phosphoenolpyruvate + UDP-N-acetyl-alpha-D-glucosamine = UDP-N-acetyl-3-O-(1-carboxyvinyl)-alpha-D-glucosamine + phosphate. The protein operates within cell wall biogenesis; peptidoglycan biosynthesis. Functionally, cell wall formation. Adds enolpyruvyl to UDP-N-acetylglucosamine. In Staphylococcus aureus (strain MRSA252), this protein is UDP-N-acetylglucosamine 1-carboxyvinyltransferase 2.